Reading from the N-terminus, the 120-residue chain is NAD(P)H-quinone oxidoreductase subunit 3, chloroplastic (120 aa).

3 helical membrane-spanning segments follow: residues 9-29 (IFWA…TISG), 64-84 (MFAL…PWAM), and 88-108 (VLGI…IVGS).

This sequence belongs to the complex I subunit 3 family. As to quaternary structure, NDH is composed of at least 16 different subunits, 5 of which are encoded in the nucleus.

The protein resides in the plastid. Its subcellular location is the chloroplast thylakoid membrane. It catalyses the reaction a plastoquinone + NADH + (n+1) H(+)(in) = a plastoquinol + NAD(+) + n H(+)(out). The enzyme catalyses a plastoquinone + NADPH + (n+1) H(+)(in) = a plastoquinol + NADP(+) + n H(+)(out). Its function is as follows. NDH shuttles electrons from NAD(P)H:plastoquinone, via FMN and iron-sulfur (Fe-S) centers, to quinones in the photosynthetic chain and possibly in a chloroplast respiratory chain. The immediate electron acceptor for the enzyme in this species is believed to be plastoquinone. Couples the redox reaction to proton translocation, and thus conserves the redox energy in a proton gradient. This chain is NAD(P)H-quinone oxidoreductase subunit 3, chloroplastic, found in Lotus japonicus (Lotus corniculatus var. japonicus).